The chain runs to 350 residues: Transmembrane protein 185B (350 aa).

7 helical membrane passes run 16–36, 41–61, 81–101, 111–131, 168–188, 211–231, and 240–260; these read LIYTCLLLFSVLLPLRLDGII, WAVFAPIWLWKLLVVAGASVG, FKAMLIAVGIHLLLLMFEVLV, FWLLVFMPLFFVSPVSVAACV, WLVVFVPLWILMSFLCLVVLY, VTMAISWITIVVPLLTFEVLL, and TFSYVSIFVPLWLSLLTLMAT.

This sequence belongs to the TMEM185 family.

It is found in the membrane. The chain is Transmembrane protein 185B (TMEM185B) from Homo sapiens (Human).